We begin with the raw amino-acid sequence, 56 residues long: Preprotein translocase subunit SecG (56 aa).

At Met1–Ser29 the chain is on the cytoplasmic side. Residues Pro30 to Gly51 form a helical membrane-spanning segment. The Extracellular portion of the chain corresponds to Pro52–Gly56.

The protein belongs to the SEC61-beta family. As to quaternary structure, component of the protein translocase complex. Heterotrimer consisting of alpha (SecY), beta (SecG) and gamma (SecE) subunits. Can form oligomers of the heterotrimer.

Its subcellular location is the cell membrane. Involved in protein export. The function of the beta subunit is unknown, but it may be involved in stabilization of the trimeric complex. This Thermococcus gammatolerans (strain DSM 15229 / JCM 11827 / EJ3) protein is Preprotein translocase subunit SecG.